Here is a 313-residue protein sequence, read N- to C-terminus: MTSCQVAEDPIKKVAIFGGTHGNELTGVFLVKHWLENNTEIQRTGLEVKPFITNPRAVEKCTRYIDCDLNRVFDPENLGKRMSEDLPYEVRRAQEISRLFGPKDSEDSYDIIFDLHNTTSNMGCTLILEDSRNDFLIQMFHYIKTSLAPLPCYVYLIEHPSLKYATTRSIAKYPVGIEVGPQPQGVLRADILDQMRKMIKHALDFIHNFNEGKEFPPCAIEVYKIMEKVDYPRNESGEIAAIIHPKLQDQDWKPLHPGDPVFLTLDGKTIPLGGDCTVYPVFVNEAAYYEKKEAFAKTTKLTLNAKGIHSSLH.

Zn(2+)-binding residues include H21 and E24. Residues R63, N70, and R71 each contribute to the N-acetyl-L-aspartate site. H116 contributes to the Zn(2+) binding site. N-acetyl-L-aspartate contacts are provided by Y164 and R168. E178 acts as the Proton donor/acceptor in catalysis. Y288 contributes to the N-acetyl-L-aspartate binding site.

This sequence belongs to the AspA/AstE family. Aspartoacylase subfamily. As to quaternary structure, homodimer. Zn(2+) is required as a cofactor.

It localises to the cytoplasm. The protein localises to the nucleus. The enzyme catalyses an N-acyl-L-aspartate + H2O = a carboxylate + L-aspartate. The catalysed reaction is N-acetyl-L-aspartate + H2O = L-aspartate + acetate. Catalyzes the deacetylation of N-acetylaspartic acid (NAA) to produce acetate and L-aspartate. NAA occurs in high concentration in brain and its hydrolysis NAA plays a significant part in the maintenance of intact white matter. In other tissues it acts as a scavenger of NAA from body fluids. This Sus scrofa (Pig) protein is Aspartoacylase (ASPA).